The chain runs to 571 residues: Proline-rich protein 35 (571 aa).

Disordered stretches follow at residues 1-27 (MSRE…PHYI), 79-187 (GSTT…EGSV), 286-402 (APVS…GSPE), and 476-571 (GPQA…GAEV). The span at 16-26 (ARSRKPKKPHY) shows a compositional bias: basic residues. Residues 165-175 (GMGGDPRGVGA) are compositionally biased toward gly residues. The span at 316–336 (TPRDPGQEGELERAAQSDPRR) shows a compositional bias: basic and acidic residues. Polar residues predominate over residues 351-367 (PSLTRFCSRSSLPTGSS). Residues 380-399 (PETPGPEGPLPLQPRGPVPG) show a composition bias toward pro residues.

In Homo sapiens (Human), this protein is Proline-rich protein 35 (PRR35).